The sequence spans 111 residues: Large ribosomal subunit protein uL22 (111 aa).

Belongs to the universal ribosomal protein uL22 family. As to quaternary structure, part of the 50S ribosomal subunit.

In terms of biological role, this protein binds specifically to 23S rRNA; its binding is stimulated by other ribosomal proteins, e.g. L4, L17, and L20. It is important during the early stages of 50S assembly. It makes multiple contacts with different domains of the 23S rRNA in the assembled 50S subunit and ribosome. Its function is as follows. The globular domain of the protein is located near the polypeptide exit tunnel on the outside of the subunit, while an extended beta-hairpin is found that lines the wall of the exit tunnel in the center of the 70S ribosome. This is Large ribosomal subunit protein uL22 from Clostridium beijerinckii (strain ATCC 51743 / NCIMB 8052) (Clostridium acetobutylicum).